We begin with the raw amino-acid sequence, 664 residues long: Pentatricopeptide repeat-containing protein At1g10910, chloroplastic (664 aa).

The transit peptide at 1 to 72 directs the protein to the chloroplast; the sequence is METPLLVGLE…KRHSNSYLAR (72 aa). 9 PPR repeats span residues 165-199, 200-235, 236-270, 271-305, 306-340, 341-375, 376-406, 411-445, and 446-480; these read NVYI…GLKP, DVVT…GIQM, DSVM…GHSP, NIYH…GLVP, NKVM…GYAE, NEMP…GVRS, DGYA…SETT, DLVM…AVSP, and DYNT…GHRL.

It belongs to the PPR family. P subfamily.

Its subcellular location is the plastid. It is found in the chloroplast. The sequence is that of Pentatricopeptide repeat-containing protein At1g10910, chloroplastic from Arabidopsis thaliana (Mouse-ear cress).